The primary structure comprises 289 residues: Glycine--tRNA ligase alpha subunit (289 aa).

This sequence belongs to the class-II aminoacyl-tRNA synthetase family. As to quaternary structure, tetramer of two alpha and two beta subunits.

It is found in the cytoplasm. The enzyme catalyses tRNA(Gly) + glycine + ATP = glycyl-tRNA(Gly) + AMP + diphosphate. The protein is Glycine--tRNA ligase alpha subunit (glyQ) of Rickettsia prowazekii (strain Madrid E).